Here is a 488-residue protein sequence, read N- to C-terminus: Lysine--tRNA ligase (488 aa).

Mg(2+) contacts are provided by Glu-398 and Glu-405.

It belongs to the class-II aminoacyl-tRNA synthetase family. As to quaternary structure, homodimer. It depends on Mg(2+) as a cofactor.

The protein resides in the cytoplasm. It carries out the reaction tRNA(Lys) + L-lysine + ATP = L-lysyl-tRNA(Lys) + AMP + diphosphate. The chain is Lysine--tRNA ligase from Carboxydothermus hydrogenoformans (strain ATCC BAA-161 / DSM 6008 / Z-2901).